Reading from the N-terminus, the 214-residue chain is uncharacterized protein (214 aa).

A helical membrane pass occupies residues 9-31 (FLYFAISVLVNLLFLKILYIYLF). The interval 53–74 (APPKKPGKPQKKVVKKKPEAVS) is disordered. Over residues 54–67 (PPKKPGKPQKKVVK) the composition is skewed to basic residues.

Its subcellular location is the membrane. This is an uncharacterized protein from Aquifex aeolicus (strain VF5).